Consider the following 277-residue polypeptide: Small ribosomal subunit protein uS3 (277 aa).

Positions 43 to 111 (IRKVMNKDLE…QVQLNIFEVK (69 aa)) constitute a KH type-2 domain. Residues 216–277 (FEEQQAQQGN…EAAVEPETKE (62 aa)) form a disordered region. Basic and acidic residues predominate over residues 264-277 (EVSKEAAVEPETKE).

It belongs to the universal ribosomal protein uS3 family. Part of the 30S ribosomal subunit. Forms a tight complex with proteins S10 and S14.

Binds the lower part of the 30S subunit head. Binds mRNA in the 70S ribosome, positioning it for translation. This Bifidobacterium animalis subsp. lactis (strain AD011) protein is Small ribosomal subunit protein uS3.